The following is a 449-amino-acid chain: Methylenetetrahydrofolate--tRNA-(uracil-5-)-methyltransferase TrmFO (449 aa).

9–14 (GGGMAG) is an FAD binding site.

This sequence belongs to the MnmG family. TrmFO subfamily. Requires FAD as cofactor.

The protein resides in the cytoplasm. It catalyses the reaction uridine(54) in tRNA + (6R)-5,10-methylene-5,6,7,8-tetrahydrofolate + NADH + H(+) = 5-methyluridine(54) in tRNA + (6S)-5,6,7,8-tetrahydrofolate + NAD(+). The catalysed reaction is uridine(54) in tRNA + (6R)-5,10-methylene-5,6,7,8-tetrahydrofolate + NADPH + H(+) = 5-methyluridine(54) in tRNA + (6S)-5,6,7,8-tetrahydrofolate + NADP(+). Catalyzes the folate-dependent formation of 5-methyl-uridine at position 54 (M-5-U54) in all tRNAs. In Ruegeria pomeroyi (strain ATCC 700808 / DSM 15171 / DSS-3) (Silicibacter pomeroyi), this protein is Methylenetetrahydrofolate--tRNA-(uracil-5-)-methyltransferase TrmFO.